Reading from the N-terminus, the 1382-residue chain is Suppressor of organelle fusion 2 (1382 aa).

Residues 229–463 (RIPLDEATSN…QLFNRPHPIR (235 aa)) form the BEACH domain. 2 WD repeats span residues 1094-1133 (GHQE…DEIG) and 1140-1176 (KHTR…LLAQ).

The protein belongs to the WD repeat WDR81 family. As to quaternary structure, interacts with sorf-1; the interaction is direct. Interacts with bec-1.

It localises to the early endosome. Its subcellular location is the late endosome. The protein resides in the cytoplasm. Its function is as follows. Together with sorf-1 negatively regulates the levels of phosphatidylinositol 3-phosphate (PtdIns3P) to enable the conversion of early endosomes to late endosomes. Binds to sorf-1 and the sorf-1-sorf-2 complex likely acts through bec-1, a non-catalytic subunit of phosphatidylinositol 3-kinase (PI3K), to suppress PI3K activity, thereby negatively regulating endosomal PtdIns3P levels. This is Suppressor of organelle fusion 2 from Caenorhabditis elegans.